Reading from the N-terminus, the 338-residue chain is uncharacterized protein (338 aa).

This is an uncharacterized protein from Thermoproteus tenax (TTV1).